The sequence spans 156 residues: Putative pre-16S rRNA nuclease (156 aa).

This sequence belongs to the YqgF nuclease family.

It localises to the cytoplasm. Could be a nuclease involved in processing of the 5'-end of pre-16S rRNA. The polypeptide is Putative pre-16S rRNA nuclease (Rickettsia typhi (strain ATCC VR-144 / Wilmington)).